Reading from the N-terminus, the 482-residue chain is UDP-N-acetylmuramate--L-alanine ligase (482 aa).

ATP is bound at residue 111 to 117; that stretch reads GTHGKTT.

The protein belongs to the MurCDEF family.

The protein resides in the cytoplasm. It carries out the reaction UDP-N-acetyl-alpha-D-muramate + L-alanine + ATP = UDP-N-acetyl-alpha-D-muramoyl-L-alanine + ADP + phosphate + H(+). The protein operates within cell wall biogenesis; peptidoglycan biosynthesis. Cell wall formation. The polypeptide is UDP-N-acetylmuramate--L-alanine ligase (Symbiobacterium thermophilum (strain DSM 24528 / JCM 14929 / IAM 14863 / T)).